Consider the following 563-residue polypeptide: Inorganic phosphate transporter PT2 (563 aa).

Disordered stretches follow at residues 1-51 (MAPR…SGEE) and 67-96 (DGGA…PAYS). Topologically, residues 1–127 (MAPRYHSAAE…NGEKQSLLVP (127 aa)) are extracellular. The chain crosses the membrane as a helical span at residues 128–148 (CLAVFSSNYNFTVTSIALFLM). At 149-168 (NQDPLYKDASDTVVGSSTVK) the chain is on the cytoplasmic side. A helical transmembrane segment spans residues 169-189 (MLSYAGAIVGMCTMGYLGDLI). Over 190-192 (GRR) the chain is Extracellular. Residues 193–213 (LAMILTLALVFIGALLSSICA) form a helical membrane-spanning segment. Residues 214-217 (WGDG) are Cytoplasmic-facing. Residues 218–238 (VTVLVIMGVCRFVLGVGSGGV) form a helical membrane-spanning segment. Residues 239-263 (YPLSAVSAAEGAGSEKSNDRSMRVS) are Extracellular-facing. A helical membrane pass occupies residues 264 to 284 (WAYSMNVPGIMFPYIVALVLW). Residues 285 to 291 (CTTHNVD) are Cytoplasmic-facing. The chain crosses the membrane as a helical span at residues 292-312 (VCFRILLGFGALPALLIWLPA). The Extracellular segment spans residues 313–342 (WRMKEDRAYVAKDFAKHLAGVFVSRSYWRQ). A helical membrane pass occupies residues 343 to 363 (LLGTGVCWLLYDVTAYGILLV). At 364–380 (QPEITQSIWGNSSSVTD) the chain is on the cytoplasmic side. Residues 381–401 (VIWQNIILNGMGIPGCFMGIL) form a helical membrane-spanning segment. Residues 402-412 (VLKQMGVKWLQ) lie on the Extracellular side of the membrane. A helical membrane pass occupies residues 413 to 433 (FWGFVGLAVSAFLMAATVEIL). Topologically, residues 434–440 (QGKAWAQ) are cytoplasmic. Residues 441 to 461 (LVLLCIVNFFINWGASITTFI) form a helical membrane-spanning segment. Residues 462-477 (LPSLVFPPEVRSTYSG) are Extracellular-facing. The chain crosses the membrane as a helical span at residues 478–498 (ISAALGKIGAVGGIYTMKAIL). Over 499–504 (STGGLT) the chain is Cytoplasmic. Residues 505 to 525 (PMMICAGVPSLAAAILTWFYV) form a helical membrane-spanning segment. Residues 526 to 563 (DPVPNTLRSSFLQCFGSLAGSCPFIDCRKFRRGSRAFE) lie on the Extracellular side of the membrane.

The protein belongs to the major facilitator superfamily. Phosphate:H(+) symporter (TC 2.A.1.9) family.

The protein resides in the cell membrane. The catalysed reaction is phosphate(in) = phosphate(out). Inorganic phosphate transporter. Activity is likely sodium-independent. Exhibits higher activity under acidic pH, implying that either the monovalent form of phosphate is the preferred substrate or the transport activity is H(+)-dependent. The chain is Inorganic phosphate transporter PT2 from Toxoplasma gondii (strain ATCC 50861 / VEG).